We begin with the raw amino-acid sequence, 101 residues long: Urease subunit beta (101 aa).

Belongs to the urease beta subunit family. As to quaternary structure, heterotrimer of UreA (gamma), UreB (beta) and UreC (alpha) subunits. Three heterotrimers associate to form the active enzyme.

The protein localises to the cytoplasm. It carries out the reaction urea + 2 H2O + H(+) = hydrogencarbonate + 2 NH4(+). Its pathway is nitrogen metabolism; urea degradation; CO(2) and NH(3) from urea (urease route): step 1/1. The chain is Urease subunit beta from Albidiferax ferrireducens (strain ATCC BAA-621 / DSM 15236 / T118) (Rhodoferax ferrireducens).